The primary structure comprises 84 residues: Small ribosomal subunit protein uS17 (84 aa).

This sequence belongs to the universal ribosomal protein uS17 family. Part of the 30S ribosomal subunit.

One of the primary rRNA binding proteins, it binds specifically to the 5'-end of 16S ribosomal RNA. This chain is Small ribosomal subunit protein uS17, found in Karelsulcia muelleri (strain GWSS) (Sulcia muelleri).